A 320-amino-acid polypeptide reads, in one-letter code: ATP-dependent 6-phosphofructokinase (320 aa).

Gly12 serves as a coordination point for ATP. 22 to 26 (RGVVR) serves as a coordination point for ADP. ATP-binding positions include 73–74 (RF) and 103–106 (GDGS). Asp104 contacts Mg(2+). 126–128 (TID) contributes to the substrate binding site. Asp128 functions as the Proton acceptor in the catalytic mechanism. Arg155 lines the ADP pocket. Residues Arg163 and 170–172 (MGR) each bind substrate. ADP is bound by residues 186–188 (GCE), Lys212, and 214–216 (KKH). Residues Glu223, Arg244, and 250–253 (HIQR) each bind substrate.

It belongs to the phosphofructokinase type A (PFKA) family. ATP-dependent PFK group I subfamily. Prokaryotic clade 'B1' sub-subfamily. As to quaternary structure, homotetramer. Mg(2+) serves as cofactor.

The protein resides in the cytoplasm. The enzyme catalyses beta-D-fructose 6-phosphate + ATP = beta-D-fructose 1,6-bisphosphate + ADP + H(+). The protein operates within carbohydrate degradation; glycolysis; D-glyceraldehyde 3-phosphate and glycerone phosphate from D-glucose: step 3/4. Its activity is regulated as follows. Allosterically activated by ADP and other diphosphonucleosides, and allosterically inhibited by phosphoenolpyruvate. Functionally, catalyzes the phosphorylation of D-fructose 6-phosphate to fructose 1,6-bisphosphate by ATP, the first committing step of glycolysis. The polypeptide is ATP-dependent 6-phosphofructokinase (Photobacterium profundum (strain SS9)).